Consider the following 474-residue polypeptide: ATP synthase subunit beta (474 aa).

153–160 (GGAGVGKT) lines the ATP pocket.

It belongs to the ATPase alpha/beta chains family. As to quaternary structure, F-type ATPases have 2 components, CF(1) - the catalytic core - and CF(0) - the membrane proton channel. CF(1) has five subunits: alpha(3), beta(3), gamma(1), delta(1), epsilon(1). CF(0) has three main subunits: a(1), b(2) and c(9-12). The alpha and beta chains form an alternating ring which encloses part of the gamma chain. CF(1) is attached to CF(0) by a central stalk formed by the gamma and epsilon chains, while a peripheral stalk is formed by the delta and b chains.

It localises to the cell inner membrane. The enzyme catalyses ATP + H2O + 4 H(+)(in) = ADP + phosphate + 5 H(+)(out). Produces ATP from ADP in the presence of a proton gradient across the membrane. The catalytic sites are hosted primarily by the beta subunits. This Rickettsia typhi (strain ATCC VR-144 / Wilmington) protein is ATP synthase subunit beta.